The sequence spans 62 residues: UPF0370 protein ESA_00777 (62 aa).

A helical membrane pass occupies residues 4 to 24 (LGKYWWVLVLVFLLGVLLNVI). Over residues 36–51 (MDNRPELPPHRDFNDK) the composition is skewed to basic and acidic residues. The segment at 36 to 62 (MDNRPELPPHRDFNDKWDDEDDWPKKK) is disordered. Residues 52 to 62 (WDDEDDWPKKK) are compositionally biased toward acidic residues.

It belongs to the UPF0370 family.

Its subcellular location is the cell membrane. In Cronobacter sakazakii (strain ATCC BAA-894) (Enterobacter sakazakii), this protein is UPF0370 protein ESA_00777.